We begin with the raw amino-acid sequence, 425 residues long: Serine--tRNA ligase (425 aa).

231–233 (TAE) lines the L-serine pocket. ATP is bound at residue 262–264 (RSE). E285 is a binding site for L-serine. 349 to 352 (EISS) is a binding site for ATP. S385 contacts L-serine.

It belongs to the class-II aminoacyl-tRNA synthetase family. Type-1 seryl-tRNA synthetase subfamily. Homodimer. The tRNA molecule binds across the dimer.

Its subcellular location is the cytoplasm. It carries out the reaction tRNA(Ser) + L-serine + ATP = L-seryl-tRNA(Ser) + AMP + diphosphate + H(+). The catalysed reaction is tRNA(Sec) + L-serine + ATP = L-seryl-tRNA(Sec) + AMP + diphosphate + H(+). The protein operates within aminoacyl-tRNA biosynthesis; selenocysteinyl-tRNA(Sec) biosynthesis; L-seryl-tRNA(Sec) from L-serine and tRNA(Sec): step 1/1. Its function is as follows. Catalyzes the attachment of serine to tRNA(Ser). Is also able to aminoacylate tRNA(Sec) with serine, to form the misacylated tRNA L-seryl-tRNA(Sec), which will be further converted into selenocysteinyl-tRNA(Sec). The protein is Serine--tRNA ligase of Bartonella quintana (strain Toulouse) (Rochalimaea quintana).